A 309-amino-acid polypeptide reads, in one-letter code: Ribosomal RNA large subunit methyltransferase F (309 aa).

Belongs to the methyltransferase superfamily. METTL16/RlmF family.

It is found in the cytoplasm. It carries out the reaction adenosine(1618) in 23S rRNA + S-adenosyl-L-methionine = N(6)-methyladenosine(1618) in 23S rRNA + S-adenosyl-L-homocysteine + H(+). Specifically methylates the adenine in position 1618 of 23S rRNA. In Cronobacter sakazakii (strain ATCC BAA-894) (Enterobacter sakazakii), this protein is Ribosomal RNA large subunit methyltransferase F.